We begin with the raw amino-acid sequence, 87 residues long: Cell division topological specificity factor (87 aa).

Belongs to the MinE family.

In terms of biological role, prevents the cell division inhibition by proteins MinC and MinD at internal division sites while permitting inhibition at polar sites. This ensures cell division at the proper site by restricting the formation of a division septum at the midpoint of the long axis of the cell. This is Cell division topological specificity factor from Neisseria meningitidis serogroup C (strain 053442).